The following is a 518-amino-acid chain: Integrator complex subunit 14 (518 aa).

Residues 2–204 (PTVVVMDVSL…KNVQSMFGKL (203 aa)) form the VWFA domain. Ser-10, Ser-12, and Thr-86 together coordinate Mg(2+). Residue Lys-418 is modified to N6-acetyllysine.

This sequence belongs to the Integrator subunit 14 family. Component of the Integrator complex, composed of core subunits INTS1, INTS2, INTS3, INTS4, INTS5, INTS6, INTS7, INTS8, INTS9/RC74, INTS10, INTS11/CPSF3L, INTS12, INTS13, INTS14 and INTS15. The core complex associates with protein phosphatase 2A subunits PPP2CA and PPP2R1A, to form the Integrator-PP2A (INTAC) complex. INTS14 is part of the tail subcomplex, composed of INTS10, INTS13, INTS14 and INTS15. Strongly expressed in numerous cancer cells compared with their non-cancerous counterparts (lung, prostate, colon, stomach and skin).

Its subcellular location is the nucleus. Functionally, component of the integrator complex, a multiprotein complex that terminates RNA polymerase II (Pol II) transcription in the promoter-proximal region of genes. The integrator complex provides a quality checkpoint during transcription elongation by driving premature transcription termination of transcripts that are unfavorably configured for transcriptional elongation: the complex terminates transcription by (1) catalyzing dephosphorylation of the C-terminal domain (CTD) of Pol II subunit POLR2A/RPB1 and SUPT5H/SPT5, (2) degrading the exiting nascent RNA transcript via endonuclease activity and (3) promoting the release of Pol II from bound DNA. The integrator complex is also involved in terminating the synthesis of non-coding Pol II transcripts, such as enhancer RNAs (eRNAs), small nuclear RNAs (snRNAs), telomerase RNAs and long non-coding RNAs (lncRNAs). Within the integrator complex, INTS14 is part of the integrator tail module that acts as a platform for the recruitment of transcription factors at promoters. The sequence is that of Integrator complex subunit 14 from Homo sapiens (Human).